A 132-amino-acid polypeptide reads, in one-letter code: Small ribosomal subunit protein uS8 (132 aa).

This sequence belongs to the universal ribosomal protein uS8 family. As to quaternary structure, part of the 30S ribosomal subunit. Contacts proteins S5 and S12.

In terms of biological role, one of the primary rRNA binding proteins, it binds directly to 16S rRNA central domain where it helps coordinate assembly of the platform of the 30S subunit. The chain is Small ribosomal subunit protein uS8 from Mycobacterium bovis (strain ATCC BAA-935 / AF2122/97).